Here is a 116-residue protein sequence, read N- to C-terminus: U16-barytoxin-Tl1b (116 aa).

A signal peptide spans 1 to 20 (MKTIIVFLSLLVLATKFGDA). Positions 21–74 (KEGVNQKQKKEVTQNEFREEYLNEMAAMSLVQQLEAIERALFENEAGRNSRQKR) are excised as a propeptide. 3 disulfide bridges follow: Cys-75-Cys-90, Cys-82-Cys-95, and Cys-89-Cys-110.

It belongs to the neurotoxin 14 (magi-1) family. 06 (ICK-Trit) subfamily. Expressed by the venom gland.

It is found in the secreted. Functionally, ion channel inhibitor. This is U16-barytoxin-Tl1b from Trittame loki (Brush-footed trapdoor spider).